The chain runs to 82 residues: Splicing factor U2AF 35 kDa subunit (82 aa).

Ala-2 is modified (N-acetylalanine). The C3H1-type zinc finger occupies Glu-12–Pro-40. N6-methyllysine is present on Lys-39. Positions Ser-65 to Phe-82 constitute an RRM domain.

The protein belongs to the splicing factor SR family. As to quaternary structure, identified in the spliceosome C complex. Heterodimer with U2AF2. Interacts (via RS domain) with PHF5A (via N-terminus). Interacts with ZRANB2. Interacts with SDE2. Interacts with SF3B1.

Its subcellular location is the nucleus. It is found in the nucleus speckle. Its function is as follows. Plays a critical role in both constitutive and enhancer-dependent splicing by mediating protein-protein interactions and protein-RNA interactions required for accurate 3'-splice site selection. Recruits U2 snRNP to the branch point. Directly mediates interactions between U2AF2 and proteins bound to the enhancers and thus may function as a bridge between U2AF2 and the enhancer complex to recruit it to the adjacent intron. The polypeptide is Splicing factor U2AF 35 kDa subunit (U2AF1) (Sus scrofa (Pig)).